The primary structure comprises 308 residues: Olfactory receptor OR9H1 (308 aa).

Residues 1-26 lie on the Extracellular side of the membrane; that stretch reads MVNFTHVSEFVLLGFQGGPGMQAMLF. A helical membrane pass occupies residues 27 to 47; that stretch reads LIFLILYGIAVVGNLGMIVII. Residues 48-58 are Cytoplasmic-facing; sequence WVDAHLHTPMY. Residues 59–81 form a helical membrane-spanning segment; sequence AFLQSLSLLDICYSSTIAPRALA. The Extracellular segment spans residues 82 to 95; the sequence is NSMQEDHTISFGGC. C95 and C177 are disulfide-bonded. The chain crosses the membrane as a helical span at residues 96-116; the sequence is AAQFFFLSLFGITEAFLLAAM. Over 117-137 the chain is Cytoplasmic; sequence AYDRFIAICNPLLYSVSMSHQ. A helical transmembrane segment spans residues 138-158; it reads VCVLLISGSYLWGVVNAIAQT. The Extracellular portion of the chain corresponds to 159–203; that stretch reads TMTFRLPFCGSNEINDFFCDVPPLLSLSCSDTFINQLVLLGLCGS. The chain crosses the membrane as a helical span at residues 204–224; that stretch reads IIVSTFLIVLVSYIYIISTIL. At 225–245 the chain is on the cytoplasmic side; sequence RIPTMQGCQKAFSTCASHLTG. Residues 246–266 form a helical membrane-spanning segment; it reads VCLFFGTVFFMYAQPSAIFFM. Residues 267 to 269 are Extracellular-facing; that stretch reads EQS. The helical transmembrane segment at 270-290 threads the bilayer; the sequence is KIVSIFYTMVIPMLNPLIYSL. Over 291-308 the chain is Cytoplasmic; it reads RNKEVKQALRRSMQKLSL.

The protein belongs to the G-protein coupled receptor 1 family.

The protein resides in the cell membrane. Odorant receptor. This chain is Olfactory receptor OR9H1, found in Homo sapiens (Human).